We begin with the raw amino-acid sequence, 331 residues long: uncharacterized protein (331 aa).

WD repeat units lie at residues 53–92, 97–139, 144–184, and 300–331; these read KAHT…KSAV, QQST…KLIR, AHND…DSTD, and ASEE…AFRV.

It is found in the cytoplasm. The protein localises to the nucleus. This is an uncharacterized protein from Schizosaccharomyces pombe (strain 972 / ATCC 24843) (Fission yeast).